The primary structure comprises 434 residues: Chemotaxis protein MotC (434 aa).

The signal sequence occupies residues 1 to 15; that stretch reads MLKRLCTILAASALA. Residues 344–417 are disordered; it reads VVRPPLGESP…DPALDGFLAS (74 aa).

Its subcellular location is the periplasm. Required for the rotation of the flagellar motor. Might control the energy flux or coupling that drives flagellar rotation. This chain is Chemotaxis protein MotC (motC), found in Rhizobium meliloti (strain 1021) (Ensifer meliloti).